The primary structure comprises 499 residues: Sensor histidine kinase PdtaS (499 aa).

The GAF stretch occupies residues 4–149 (LGDLLAEHTM…PLEGAYLDCA (146 aa)). Residues 178-289 (DGFIRLNEGG…TEVKRRDRAL (112 aa)) form a PAS-like region. Residues 298–493 (EIHHRVKNNL…DVVLRVPIGR (196 aa)) enclose the Histidine kinase domain. Position 301 is a phosphohistidine; by autocatalysis (His-301).

In terms of processing, autophosphorylated.

The protein localises to the cytoplasm. The catalysed reaction is ATP + protein L-histidine = ADP + protein N-phospho-L-histidine.. In terms of biological role, member of the two-component regulatory system PdtaR/PdtaS. This two-component system plays an essential role in mycobacterial adaptation to poor nutrient conditions. Nutrient deprivation results in increasing intracellular concentrations of cyclic diguanosine monophosphate (c-di-GMP), which binds to the PdtaS sensor and promotes its autophosphorylation, leading to the activation of the signaling cascade. The phosphate group is then transferred to PdtaR. The sequence is that of Sensor histidine kinase PdtaS from Mycolicibacterium smegmatis (strain ATCC 700084 / mc(2)155) (Mycobacterium smegmatis).